A 156-amino-acid chain; its full sequence is Pilin-like protein PilA1 (156 aa).

A propeptide spans 1–5 (leader sequence); that stretch reads MTRRG. At leucine 6 the chain carries N-methylleucine. A helical membrane pass occupies residues 6-29; sequence LTLLELLLVLGILGVLLGLALPLL.

It is found in the cell inner membrane. Its subcellular location is the cell outer membrane. The protein resides in the periplasm. Its function is as follows. Plays an essential role in natural DNA transformation but is not required for pilus biogenesis. In Thermus thermophilus (strain ATCC BAA-163 / DSM 7039 / HB27), this protein is Pilin-like protein PilA1 (pilA1).